The following is a 261-amino-acid chain: Putative outer membrane protein TC_0650 (261 aa).

The first 17 residues, 1–17 (MRFLFAFILLCSPWVSE), serve as a signal peptide directing secretion.

The protein resides in the cell outer membrane. This Chlamydia muridarum (strain MoPn / Nigg) protein is Putative outer membrane protein TC_0650.